A 121-amino-acid polypeptide reads, in one-letter code: NADH-quinone oxidoreductase subunit A 1 (121 aa).

3 helical membrane-spanning segments follow: residues 11–31 (IAIFIGIALVIGLALLVAPFA), 65–85 (LVSILFIIFDLEVAFLFPWAV), and 90–110 (MGWFGFWSMMVFLLVLTVGFI).

The protein belongs to the complex I subunit 3 family. In terms of assembly, NDH-1 is composed of 14 different subunits. Subunits NuoA, H, J, K, L, M, N constitute the membrane sector of the complex.

Its subcellular location is the cell inner membrane. The catalysed reaction is a quinone + NADH + 5 H(+)(in) = a quinol + NAD(+) + 4 H(+)(out). In terms of biological role, NDH-1 shuttles electrons from NADH, via FMN and iron-sulfur (Fe-S) centers, to quinones in the respiratory chain. The immediate electron acceptor for the enzyme in this species is believed to be ubiquinone. Couples the redox reaction to proton translocation (for every two electrons transferred, four hydrogen ions are translocated across the cytoplasmic membrane), and thus conserves the redox energy in a proton gradient. In Rhizobium meliloti (strain 1021) (Ensifer meliloti), this protein is NADH-quinone oxidoreductase subunit A 1.